Consider the following 819-residue polypeptide: USP6 N-terminal-like protein (819 aa).

Methionine 1 carries the post-translational modification N-acetylmethionine. The 193-residue stretch at 100–292 (GIPLQLRGEV…RIWDIYIFEG (193 aa)) folds into the Rab-GAP TBC domain. The segment covering 355 to 367 (DLPEPGKEDEYPK) has biased composition (basic and acidic residues). Disordered regions lie at residues 355–498 (DLPE…ERTT) and 513–678 (LPVA…SRPT). Residues serine 389, serine 394, and serine 398 each carry the phosphoserine modification. Composition is skewed to basic and acidic residues over residues 399-414 (SRRE…EHSP) and 432-449 (KSVD…ESQR). Low complexity predominate over residues 464 to 476 (HAAANQNSNAISN). 2 stretches are compositionally biased toward basic and acidic residues: residues 477-489 (VRKE…RKPS) and 533-542 (KALDGGEGKR). Phosphoserine occurs at positions 544 and 547. Positions 556-571 (ESEHGASAEEGPERTH) are enriched in basic and acidic residues. Residues serine 574, serine 631, serine 644, serine 648, serine 665, serine 669, and serine 704 each carry the phosphoserine modification. Residues 642–655 (FVSTQISPRPQINP) are compositionally biased toward polar residues. A Phosphotyrosine modification is found at tyrosine 717. The span at 788–802 (ASPPGYPYAGPSPSA) shows a compositional bias: low complexity. Residues 788 to 807 (ASPPGYPYAGPSPSAHHYRN) form a disordered region.

Interacts with EPS8.

Its subcellular location is the golgi apparatus. It localises to the cytoplasmic vesicle. Its function is as follows. Acts as a GTPase-activating protein for RAB5A and RAB43. Involved in receptor trafficking. In complex with EPS8 inhibits internalization of EGFR. Involved in retrograde transport from the endocytic pathway to the Golgi apparatus. Involved in the transport of Shiga toxin from early and recycling endosomes to the trans-Golgi network. Required for structural integrity of the Golgi complex. In Mus musculus (Mouse), this protein is USP6 N-terminal-like protein (Usp6nl).